Reading from the N-terminus, the 192-residue chain is MYQELIKQELVTAQQALADFIADAENINAIERAATLIAASLRDGGKVMSCGNGGSHCDAMHFAEELTGRYREDRPGYAGIAISDPSHLSCVSNDYGYQYVFSRYLEAVGRPGDVMLGISTSGNSQNIITAIESAKAKGIKVVVLTGKDGGKMAGLADVEIRVPYFGYADRIQEIHIKVIHILIMLIEKELAV.

The SIS domain occupies 37–192 (IAASLRDGGK…IMLIEKELAV (156 aa)). Residue 52 to 54 (NGG) participates in substrate binding. The Zn(2+) site is built by His-61 and Glu-65. Substrate-binding positions include Glu-65, 93–94 (ND), 119–121 (STS), Ser-124, and Gln-172. Zn(2+)-binding residues include Gln-172 and His-180.

It belongs to the SIS family. GmhA subfamily. In terms of assembly, homotetramer. It depends on Zn(2+) as a cofactor.

The protein localises to the cytoplasm. The enzyme catalyses 2 D-sedoheptulose 7-phosphate = D-glycero-alpha-D-manno-heptose 7-phosphate + D-glycero-beta-D-manno-heptose 7-phosphate. The protein operates within carbohydrate biosynthesis; D-glycero-D-manno-heptose 7-phosphate biosynthesis; D-glycero-alpha-D-manno-heptose 7-phosphate and D-glycero-beta-D-manno-heptose 7-phosphate from sedoheptulose 7-phosphate: step 1/1. Functionally, catalyzes the isomerization of sedoheptulose 7-phosphate in D-glycero-D-manno-heptose 7-phosphate. The protein is Phosphoheptose isomerase of Tolumonas auensis (strain DSM 9187 / NBRC 110442 / TA 4).